A 203-amino-acid polypeptide reads, in one-letter code: Imidazoleglycerol-phosphate dehydratase (203 aa).

It belongs to the imidazoleglycerol-phosphate dehydratase family.

The protein localises to the cytoplasm. The catalysed reaction is D-erythro-1-(imidazol-4-yl)glycerol 3-phosphate = 3-(imidazol-4-yl)-2-oxopropyl phosphate + H2O. Its pathway is amino-acid biosynthesis; L-histidine biosynthesis; L-histidine from 5-phospho-alpha-D-ribose 1-diphosphate: step 6/9. The polypeptide is Imidazoleglycerol-phosphate dehydratase (Salinispora arenicola (strain CNS-205)).